The chain runs to 144 residues: Large ribosomal subunit protein uL16 (144 aa).

The segment covering 1–16 (MLIPKRVKYRKQHRGR) has biased composition (basic residues). The tract at residues 1-23 (MLIPKRVKYRKQHRGRPGGGMAK) is disordered.

Belongs to the universal ribosomal protein uL16 family. Part of the 50S ribosomal subunit.

Binds 23S rRNA and is also seen to make contacts with the A and possibly P site tRNAs. This is Large ribosomal subunit protein uL16 from Pelotomaculum thermopropionicum (strain DSM 13744 / JCM 10971 / SI).